Consider the following 396-residue polypeptide: MPTFRTLDEADLAGKRVLVRVDLNVPMDEGRVTDDTRIQAILPTIRAITEKGGKAILLSHFGRPKGRDASQSLAPVAAAVGERLGAPVAFAGDCIGSDAEAAVSTLAPGAVLVLENTRFHAGEEKNAADFVQQLAALGDIYVNDAFSAAHRAHASTEGLAHKLPAFAGRSMQKELEALAKALEAPQRPVLAVVGGAKVSSKLELLGNLTAKVDILVIGGGMANTFLAAKGVKVGKSLCEHDLADTARQIIATAASHGCEIVLPVDAVVTKTFAAHADHRVVPVDQVAEDEMILDAGPATVALVREKLKGAKTVVWNGPFGAFELPPFDAATVAVAKAVAEATKAGALLSVAGGGDTVAALNHAGAAGDFSYVSTAGGAFLEWLEGKQLPGVEALRR.

Substrate-binding positions include 22–24, Arg-37, 60–63, Arg-118, and Arg-151; these read DLN and HFGR. Residues Lys-201, Glu-323, and 353–356 contribute to the ATP site; that span reads GGDT.

The protein belongs to the phosphoglycerate kinase family. In terms of assembly, monomer.

The protein resides in the cytoplasm. The enzyme catalyses (2R)-3-phosphoglycerate + ATP = (2R)-3-phospho-glyceroyl phosphate + ADP. The protein operates within carbohydrate degradation; glycolysis; pyruvate from D-glyceraldehyde 3-phosphate: step 2/5. The polypeptide is Phosphoglycerate kinase (Azorhizobium caulinodans (strain ATCC 43989 / DSM 5975 / JCM 20966 / LMG 6465 / NBRC 14845 / NCIMB 13405 / ORS 571)).